The primary structure comprises 513 residues: MSNETATLVKLSAAEQAAAVKKGDVTSRELVEAHLKVIEAAEPSIKAFLKVSGDVALEQADAFDAKSAEDKAALPELAGVPIAIKDMIVTKGIETTAASKILEGWVPPYDATVIEKLKAAGMPILGKTNLDEFAQGSSTEHSAYQTTHNPWDTERVPGGSGGGSASAVAAFEAPIALGTDTGGSIRQPGALTGTVGVKPTYGGVSRFGAIAMASSLDQIGPVSRTVLDSALLQEIIGGHDKRDSTSIPEGPRPMVAAAREGAKRDLKGMKVGLIKELGGDGFQPGVEARFNEAVDKLKEMGAEVVEVSVPHIGYSLGAYYIIMPSEVSSNLARYDGMRYGLRVMPPTGVPQTAANMMAYTREAGFGDEVKRRIILGTYALSAGYYDAWYGSAQKVRTLIIEDFKKAFEQVDVLVAPTSPSTAFKFGEKMDDPLAMYMNDIATIPANLAGVPAMSIPAGLSDDGLPVGFQFIAPQQRDEVMYKPAAALEAALEDSWNGPIWNDLKTPWLDGLGK.

Active-site charge relay system residues include Lys85 and Ser160. Catalysis depends on Ser184, which acts as the Acyl-ester intermediate.

It belongs to the amidase family. GatA subfamily. In terms of assembly, heterotrimer of A, B and C subunits.

The enzyme catalyses L-glutamyl-tRNA(Gln) + L-glutamine + ATP + H2O = L-glutaminyl-tRNA(Gln) + L-glutamate + ADP + phosphate + H(+). Functionally, allows the formation of correctly charged Gln-tRNA(Gln) through the transamidation of misacylated Glu-tRNA(Gln) in organisms which lack glutaminyl-tRNA synthetase. The reaction takes place in the presence of glutamine and ATP through an activated gamma-phospho-Glu-tRNA(Gln). The polypeptide is Glutamyl-tRNA(Gln) amidotransferase subunit A (Bifidobacterium longum (strain NCC 2705)).